Consider the following 805-residue polypeptide: Mediator of RNA polymerase II transcription subunit 25 (805 aa).

Disordered stretches follow at residues 308–332 (NQMPPTSAVGTPFNQPPPPAMPQNT) and 647–691 (QQPQ…NPQL). The span at 647-678 (QQPQQAASQAPPQATQTTVQAPGQPQNPQPGA) shows a compositional bias: low complexity. The LXXLL motif signature appears at 691-695 (LRNLL).

The protein belongs to the Mediator complex subunit 25 family. In terms of assembly, component of the Mediator complex.

Its subcellular location is the nucleus. Functionally, component of the Mediator complex, a coactivator involved in the regulated transcription of nearly all RNA polymerase II-dependent genes. Mediator functions as a bridge to convey information from gene-specific regulatory proteins to the basal RNA polymerase II transcription machinery. Mediator is recruited to promoters by direct interactions with regulatory proteins and serves as a scaffold for the assembly of a functional preinitiation complex with RNA polymerase II and the general transcription factors. In Xenopus tropicalis (Western clawed frog), this protein is Mediator of RNA polymerase II transcription subunit 25 (med25).